A 379-amino-acid chain; its full sequence is UDP-4-amino-4-deoxy-L-arabinose--oxoglutarate aminotransferase (379 aa).

K182 carries the N6-(pyridoxal phosphate)lysine modification.

The protein belongs to the DegT/DnrJ/EryC1 family. ArnB subfamily. In terms of assembly, homodimer. Pyridoxal 5'-phosphate is required as a cofactor.

The catalysed reaction is UDP-4-amino-4-deoxy-beta-L-arabinose + 2-oxoglutarate = UDP-beta-L-threo-pentopyranos-4-ulose + L-glutamate. Its pathway is nucleotide-sugar biosynthesis; UDP-4-deoxy-4-formamido-beta-L-arabinose biosynthesis; UDP-4-deoxy-4-formamido-beta-L-arabinose from UDP-alpha-D-glucuronate: step 2/3. The protein operates within bacterial outer membrane biogenesis; lipopolysaccharide biosynthesis. Catalyzes the conversion of UDP-4-keto-arabinose (UDP-Ara4O) to UDP-4-amino-4-deoxy-L-arabinose (UDP-L-Ara4N). The modified arabinose is attached to lipid A and is required for resistance to polymyxin and cationic antimicrobial peptides. This Salmonella heidelberg (strain SL476) protein is UDP-4-amino-4-deoxy-L-arabinose--oxoglutarate aminotransferase.